The chain runs to 123 residues: Large ribosomal subunit protein bL12 (123 aa).

Belongs to the bacterial ribosomal protein bL12 family. In terms of assembly, homodimer. Part of the ribosomal stalk of the 50S ribosomal subunit. Forms a multimeric L10(L12)X complex, where L10 forms an elongated spine to which 2 to 4 L12 dimers bind in a sequential fashion. Binds GTP-bound translation factors.

In terms of biological role, forms part of the ribosomal stalk which helps the ribosome interact with GTP-bound translation factors. Is thus essential for accurate translation. The sequence is that of Large ribosomal subunit protein bL12 from Aliarcobacter butzleri (strain RM4018) (Arcobacter butzleri).